Reading from the N-terminus, the 407-residue chain is Imidazolonepropionase (407 aa).

Fe(3+)-binding residues include His74 and His76. 2 residues coordinate Zn(2+): His74 and His76. Arg83, Tyr146, and His179 together coordinate 4-imidazolone-5-propanoate. Tyr146 is a binding site for N-formimidoyl-L-glutamate. Residue His244 participates in Fe(3+) binding. His244 lines the Zn(2+) pocket. Gln247 is a binding site for 4-imidazolone-5-propanoate. Asp319 serves as a coordination point for Fe(3+). Zn(2+) is bound at residue Asp319. Residues Asn321 and Gly323 each coordinate N-formimidoyl-L-glutamate. Position 324 (Thr324) interacts with 4-imidazolone-5-propanoate.

It belongs to the metallo-dependent hydrolases superfamily. HutI family. Zn(2+) is required as a cofactor. Requires Fe(3+) as cofactor.

It localises to the cytoplasm. It carries out the reaction 4-imidazolone-5-propanoate + H2O = N-formimidoyl-L-glutamate. Its pathway is amino-acid degradation; L-histidine degradation into L-glutamate; N-formimidoyl-L-glutamate from L-histidine: step 3/3. Functionally, catalyzes the hydrolytic cleavage of the carbon-nitrogen bond in imidazolone-5-propanoate to yield N-formimidoyl-L-glutamate. It is the third step in the universal histidine degradation pathway. The chain is Imidazolonepropionase from Salmonella arizonae (strain ATCC BAA-731 / CDC346-86 / RSK2980).